A 522-amino-acid chain; its full sequence is Glucose-6-phosphate 1-dehydrogenase (522 aa).

NADP(+) is bound by residues 40-47, arginine 74, and lysine 177; that span reads GASGDLAK. D-glucose 6-phosphate contacts are provided by residues lysine 177, 207 to 211, glutamate 245, and aspartate 264; that span reads HYLGK. Histidine 269 acts as the Proton acceptor in catalysis. Residue arginine 364 participates in NADP(+) binding. D-glucose 6-phosphate contacts are provided by lysine 367 and lysine 372. The NADP(+) site is built by lysine 373, arginine 377, and arginine 401. Glutamine 403 lines the D-glucose 6-phosphate pocket. NADP(+)-binding positions include 409–411, 429–431, arginine 495, and tryptophan 517; these read YMK and DLT.

This sequence belongs to the glucose-6-phosphate dehydrogenase family.

The protein localises to the cytoplasm. The protein resides in the cytosol. The catalysed reaction is D-glucose 6-phosphate + NADP(+) = 6-phospho-D-glucono-1,5-lactone + NADPH + H(+). It participates in carbohydrate degradation; pentose phosphate pathway; D-ribulose 5-phosphate from D-glucose 6-phosphate (oxidative stage): step 1/3. In terms of biological role, cytosolic glucose-6-phosphate dehydrogenase that catalyzes the first and rate-limiting step of the oxidative branch within the pentose phosphate pathway/shunt, an alternative route to glycolysis for the dissimilation of carbohydrates and a major source of reducing power and metabolic intermediates for fatty acid and nucleic acid biosynthetic processes. This Caenorhabditis elegans protein is Glucose-6-phosphate 1-dehydrogenase (gspd-1).